The primary structure comprises 338 residues: Probable G-protein coupled receptor 160 (338 aa).

Over 1-23 (MTALSSENCSFQYQLRQTNQPLD) the chain is Extracellular. Asn8 is a glycosylation site (N-linked (GlcNAc...) asparagine). A helical membrane pass occupies residues 24–44 (VNYLLFLIILGKILLNILTLG). The Cytoplasmic portion of the chain corresponds to 45-58 (MRRKNTCQNFMEYF). The helical transmembrane segment at 59 to 79 (CISLAFVDLLLLVNISIILYF) threads the bilayer. Topologically, residues 80–93 (RDFVLLSIRFTKYH) are extracellular. Residues 94–114 (ICLFTQIISFTYGFLHYPVFL) form a helical membrane-spanning segment. Over 115-136 (TACIDYCLNFSKTTKLSFKCQK) the chain is Cytoplasmic. A helical membrane pass occupies residues 137 to 157 (LFYFFTVILIWISVLAYVLGD). At 158–177 (PAIYQSLKAQNAYSRHCPFY) the chain is on the extracellular side. Residues 178–198 (VSIQSYWLSFFMVMILFVAFI) form a helical membrane-spanning segment. Residues 199–244 (TCWEEVTTLVQAIRITSYMNETILYFPFSSHSSYTVRSKKIFLSKL) are Cytoplasmic-facing. The helical transmembrane segment at 245-265 (IVCFLSTWLPFVLLQVIIVLL) threads the bilayer. At 266–268 (KVQ) the chain is on the extracellular side. Residues 269-289 (IPAYIEMNIPWLYFVNSFLIA) traverse the membrane as a helical segment. Topologically, residues 290 to 338 (TVYWFNCHKLNLKDIGLPLDPFVNWKCCFIPLTIPNLEQIEKPISIMIC) are cytoplasmic.

Belongs to the G-protein coupled receptor 1 family.

The protein localises to the cell membrane. Its function is as follows. Orphan receptor. The polypeptide is Probable G-protein coupled receptor 160 (GPR160) (Homo sapiens (Human)).